We begin with the raw amino-acid sequence, 208 residues long: uncharacterized protein (208 aa).

Disordered stretches follow at residues 74-117 and 181-208; these read FEYK…RDSP and ESKL…RKFK. Over residues 184 to 208 the composition is skewed to polar residues; that stretch reads LGSSEDSGTDRFSSNTSGSSGRKFK.

This is an uncharacterized protein from Mus musculus (Mouse).